Consider the following 424-residue polypeptide: Neurotensin receptor type 1 (424 aa).

The Extracellular segment spans residues methionine 1–threonine 67. Asparagine 4, asparagine 38, and asparagine 42 each carry an N-linked (GlcNAc...) asparagine glycan. A helical membrane pass occupies residues alanine 68–leucine 88. Residues alanine 89–histidine 102 lie on the Cytoplasmic side of the membrane. A helical transmembrane segment spans residues tyrosine 103 to valine 122. Topologically, residues glutamate 123–arginine 142 are extracellular. The cysteines at positions 141 and 224 are disulfide-linked. Residues glycine 143 to valine 164 form a helical membrane-spanning segment. The Cytoplasmic segment spans residues glutamate 165–arginine 184. Residues threonine 185–phenylalanine 205 traverse the membrane as a helical segment. Topologically, residues threonine 206–lysine 234 are extracellular. Asparagine 211 carries an N-linked (GlcNAc...) asparagine glycan. A helical membrane pass occupies residues valine 235–isoleucine 259. The Cytoplasmic portion of the chain corresponds to alanine 260–leucine 308. The helical transmembrane segment at valine 309–methionine 330 threads the bilayer. The tract at residues valine 326 to tyrosine 349 is neurotensin binding. Over phenylalanine 331–histidine 348 the chain is Extracellular. A helical transmembrane segment spans residues tyrosine 349–tyrosine 369. The Cytoplasmic portion of the chain corresponds to asparagine 370–tyrosine 424. 2 S-palmitoyl cysteine lipidation sites follow: cysteine 386 and cysteine 388. Positions arginine 398–tyrosine 424 are disordered. Polar residues predominate over residues arginine 403–tyrosine 424.

The protein belongs to the G-protein coupled receptor 1 family. Neurotensin receptor subfamily. NTSR1 sub-subfamily. Interacts (palmitoylated form) with GNA11. N-glycosylated. In terms of processing, palmitoylated; this is required for normal localization at membrane rafts and normal GNA11-mediated activation of down-stream signaling cascades. The palmitoylation level increases in response to neurotensin treatment.

The protein resides in the cell membrane. The protein localises to the membrane raft. Functionally, G-protein coupled receptor for the tridecapeptide neurotensin (NTS). Signaling is effected via G proteins that activate a phosphatidylinositol-calcium second messenger system. Signaling leads to the activation of downstream MAP kinases and protects cells against apoptosis. The chain is Neurotensin receptor type 1 (Ntsr1) from Mus musculus (Mouse).